We begin with the raw amino-acid sequence, 237 residues long: uncharacterized protein (237 aa).

A disordered region spans residues 213 to 237 (GQGKYLKLDSNTTENKTTKQNETGG). Residues 223–237 (NTTENKTTKQNETGG) are compositionally biased toward low complexity.

This is an uncharacterized protein from Methanothermobacter thermautotrophicus (Methanobacterium thermoformicicum).